The primary structure comprises 199 residues: Outer-membrane lipoprotein LolB (199 aa).

The signal sequence occupies residues 1–28 (MAAAGSLCQTAWRVRGWLAAGLCALLAG). Residue Cys29 is the site of N-palmitoyl cysteine attachment. Cys29 carries S-diacylglycerol cysteine lipidation.

Belongs to the LolB family. As to quaternary structure, monomer.

The protein localises to the cell outer membrane. In terms of biological role, plays a critical role in the incorporation of lipoproteins in the outer membrane after they are released by the LolA protein. The protein is Outer-membrane lipoprotein LolB of Bordetella petrii (strain ATCC BAA-461 / DSM 12804 / CCUG 43448).